Reading from the N-terminus, the 596-residue chain is Pentatricopeptide repeat-containing protein At5g38730 (596 aa).

12 PPR repeats span residues 132-166, 167-201, 202-236, 237-271, 272-302, 306-340, 341-375, 376-410, 411-445, 446-480, 481-515, and 516-550; these read VSHV…GLKP, HLQA…GVVA, NIHV…GVFP, DIFT…GVAP, NIVT…IKDD, NHVT…GFSP, GVVT…KIEP, DNIT…GLKL, DMYS…GFSP, GYAT…GLCA, DVAL…GLVG, and DSVI…RLMV.

It belongs to the PPR family. P subfamily.

This is Pentatricopeptide repeat-containing protein At5g38730 from Arabidopsis thaliana (Mouse-ear cress).